Consider the following 302-residue polypeptide: HTH-type transcriptional regulator AlsR (302 aa).

The HTH lysR-type domain maps to 1–58 (MELRHLQYFIAVAEELHFGKAARRLNMTQPPLSQQIKQLEEEVGVTLLKRTKRFVELT). Residues 18–37 (FGKAARRLNMTQPPLSQQIK) constitute a DNA-binding region (H-T-H motif).

Belongs to the LysR transcriptional regulatory family.

Its function is as follows. Regulates the expression of the alsSD operon for acetoin biosynthesis. The polypeptide is HTH-type transcriptional regulator AlsR (alsR) (Bacillus subtilis (strain 168)).